The primary structure comprises 142 residues: Large ribosomal subunit protein bL17 (142 aa).

This sequence belongs to the bacterial ribosomal protein bL17 family. Part of the 50S ribosomal subunit. Contacts protein L32.

The protein is Large ribosomal subunit protein bL17 of Wolbachia pipientis wMel.